The chain runs to 127 residues: Glycine cleavage system H protein (127 aa).

The Lipoyl-binding domain occupies threonine 24 to lysine 106. Lysine 65 is subject to N6-lipoyllysine.

The protein belongs to the GcvH family. The glycine cleavage system is composed of four proteins: P, T, L and H. (R)-lipoate is required as a cofactor.

Its function is as follows. The glycine cleavage system catalyzes the degradation of glycine. The H protein shuttles the methylamine group of glycine from the P protein to the T protein. This is Glycine cleavage system H protein from Opitutus terrae (strain DSM 11246 / JCM 15787 / PB90-1).